The sequence spans 99 residues: MDHKAYMYVLECRDGSYYIGYTTDMRRRLAIHNSGKGAKYTRARLPVKLIYAQGFASKEEAMSAEALFKRKKRPQKEEFLSENQDRNLLSYFEESWGVL.

The 76-residue stretch at 3–78 (HKAYMYVLEC…KRKKRPQKEE (76 aa)) folds into the GIY-YIG domain.

Belongs to the UPF0213 family.

This is UPF0213 protein spr1390 from Streptococcus pneumoniae (strain ATCC BAA-255 / R6).